Here is a 501-residue protein sequence, read N- to C-terminus: Phenylalanine--tRNA ligase alpha subunit (501 aa).

Thr-340 and Phe-423 together coordinate L-phenylalanine. Residue Glu-425 coordinates Mg(2+). Phe-448 is an L-phenylalanine binding site.

This sequence belongs to the class-II aminoacyl-tRNA synthetase family. Phe-tRNA synthetase alpha subunit type 2 subfamily. As to quaternary structure, tetramer of two alpha and two beta subunits. Mg(2+) is required as a cofactor.

It localises to the cytoplasm. It catalyses the reaction tRNA(Phe) + L-phenylalanine + ATP = L-phenylalanyl-tRNA(Phe) + AMP + diphosphate + H(+). The sequence is that of Phenylalanine--tRNA ligase alpha subunit from Methanococcus maripaludis (strain C7 / ATCC BAA-1331).